We begin with the raw amino-acid sequence, 158 residues long: Cytochrome c2 (158 aa).

A Pyrrolidone carboxylic acid modification is found at Gln1. Residues Cys18, Cys21, His22, and Met102 each contribute to the heme c site. A disordered region spans residues 129-158; sequence AEAAPAADAAAPAAADAAAPAEPAAEGAAT.

It belongs to the cytochrome c family. Post-translationally, binds 1 heme c group covalently per subunit.

The protein resides in the periplasm. Cytochrome c2 is found mainly in purple, non-sulfur, photosynthetic bacteria where it functions as the electron donor to the oxidized bacteriochlorophyll in the photophosphorylation pathway. However, it may also have a role in the respiratory chain and is found in some non-photosynthetic bacteria. The chain is Cytochrome c2 from Fuscovulum blasticum (Rhodobacter blasticus).